The chain runs to 1242 residues: MEVSRGFAEAGALSPEQAASYLRYVKEAKEATKNGDLEQALKLFNLAKDIFPNEKVMSRIQKIQEALEELAEHGDDEFIDVCNSGLLLYQELHNQLYEYQKEGIAFLYSLYRDGRRGGILADDMGLGKTVQIIAFLSGMFDASLVNHVLLIMPTSLISTWLREFVKWTPGMRVKTFHGPSKDERTRNLCRIQQRNGVIITTYQMLINNWQQLSSLNGQEFLWDYVILDEAHKIKSSSTKSAICARAIPASNRILLTGTPIQNNLQELWSLFDFACQGSLLGTLRTFKMEYENPITRAREKDATPGEKALGFKISENLMAIIKPYFLRRTKEEVQKKKSSNPEVQLSEKSPDVGAICEMPSLSRKNDLIIWIRLVPLQEEIYRKFVSLDHIKELLMETRSPLAELGVLKKLCDHPRLLSARACGLLNLGAAKFSVQDEIEGEDSSDVDHIDQISDDTLMEESGKMLFLMDLLKKLRDEGHQTLVFSQSRRILNIIERLLKNRHFKILRIDGTITHLVEREKRISLFQQNKDYSVFLLTTQVGGVGLTLTAASRVVIFDPSWNPATDAQAVDRVYRIGQKENVVVYRLITCGTVEEKIYRRQVFKDSLIRQTTGDKKNPFRYFSKQELRELFTIEDFQNSATQLQLQSLHAAQRRSDKNLDEHIAFLHSLRIAGISDHDLMYTRDLSVKEELDVIEDSHYIQQRVQKAQFLVESESQNTELLMERQKMGNEGIWLREPVYQTKKKRPKVNKPQPQPSSHLPVYHTQEEISSLMASIIIDDLPKEDEKDLSRIKLNDTIPQDGRHPCVITLNDDFVTTLPKGCGDVEEIFPDSLSGMALQKEASQEGFMQESEQESPLASFNYLPSKSARVDLGPNLDQLEDDEVLHHCNPSPANPKTKEYQRPESNVSVIKIADDDLTAAHSALQDAQANEAKLEEEPLASSGQYACDFNLFLEDSADNGQNLSSQFLEHVEKENSLCGSAANSRAESVHSKACLSVDLSEEDDEPEEVVNVKIRRKARRIDSDNEDEHTFKDTSSTNPFNTSPFPFLSVKQFDASTPKNDISLPERFFSPKISDSINKSVNSRRSLASRRSLINVVLDHVEDMEERLDNSSEAKVVEDHLEEGAEESGDEAPEHTKEDPSRETLSSENKSSQLSTSKPGALAQETSPGDPEPLSDGQLVDSPQDEAMEAVNDYDTLVLHGKELKECGKIQEALDCLVKALDIKSSDPEVMLMTLSLYKQLNKT.

Residue Ser14 is modified to Phosphoserine. The TPR 1 repeat unit spans residues Tyr21–Glu54. In terms of domain architecture, Helicase ATP-binding spans Ser109–Gly277. Asp122–Thr129 provides a ligand contact to ATP. Positions Asp228–His231 match the DEAH box motif. The 161-residue stretch at Phe466 to Leu626 folds into the Helicase C-terminal domain. 2 positions are modified to phosphoserine: Ser755 and Ser773. Position 815 is a phosphothreonine (Thr815). A phosphoserine mark is found at Ser963, Ser989, Ser998, and Ser1021. Thr1055 is modified (phosphothreonine). Ser1061, Ser1090, and Ser1110 each carry phosphoserine. The tract at residues Glu1103–Pro1181 is disordered. Composition is skewed to basic and acidic residues over residues Arg1105–Glu1121 and Ala1130–Arg1140. The segment covering Glu1141–Lys1156 has biased composition (polar residues). Residues Ser1173 and Ser1180 each carry the phosphoserine modification. The TPR 2 repeat unit spans residues Tyr1192–Asp1225.

The protein belongs to the SNF2/RAD54 helicase family. As to quaternary structure, interacts with PLK1, which phosphorylates it. Both proteins are mutually dependent on each other for correct subcellular localization. Interacts (via N-terminal TPR repeat) with BEND3 (via BEN domains 1 and 3); the interaction is direct. Phosphorylation by PLK1 prevents the association with chromosome arms and restricts its localization to the kinetochore-centromere region.

It localises to the chromosome. The protein localises to the centromere. Its subcellular location is the kinetochore. The catalysed reaction is ATP + H2O = ADP + phosphate + H(+). Its function is as follows. DNA helicase that acts as a tension sensor that associates with catenated DNA which is stretched under tension until it is resolved during anaphase. Functions as ATP-dependent DNA translocase. Can promote Holliday junction branch migration (in vitro). The chain is DNA excision repair protein ERCC-6-like (ERCC6L) from Bos taurus (Bovine).